Consider the following 428-residue polypeptide: Gamma-glutamyl phosphate reductase (428 aa).

It belongs to the gamma-glutamyl phosphate reductase family.

Its subcellular location is the cytoplasm. The enzyme catalyses L-glutamate 5-semialdehyde + phosphate + NADP(+) = L-glutamyl 5-phosphate + NADPH + H(+). It participates in amino-acid biosynthesis; L-proline biosynthesis; L-glutamate 5-semialdehyde from L-glutamate: step 2/2. Catalyzes the NADPH-dependent reduction of L-glutamate 5-phosphate into L-glutamate 5-semialdehyde and phosphate. The product spontaneously undergoes cyclization to form 1-pyrroline-5-carboxylate. This is Gamma-glutamyl phosphate reductase from Afipia carboxidovorans (strain ATCC 49405 / DSM 1227 / KCTC 32145 / OM5) (Oligotropha carboxidovorans).